Reading from the N-terminus, the 144-residue chain is Large ribosomal subunit protein uL11 (144 aa).

The protein belongs to the universal ribosomal protein uL11 family. Part of the ribosomal stalk of the 50S ribosomal subunit. Interacts with L10 and the large rRNA to form the base of the stalk. L10 forms an elongated spine to which L12 dimers bind in a sequential fashion forming a multimeric L10(L12)X complex. Post-translationally, one or more lysine residues are methylated.

In terms of biological role, forms part of the ribosomal stalk which helps the ribosome interact with GTP-bound translation factors. This Rhodococcus erythropolis (strain PR4 / NBRC 100887) protein is Large ribosomal subunit protein uL11.